Here is a 316-residue protein sequence, read N- to C-terminus: HPr kinase/phosphorylase (316 aa).

Residues His143 and Lys164 contribute to the active site. 158 to 165 (GEAGSGKS) provides a ligand contact to ATP. Ser165 contributes to the Mg(2+) binding site. Asp182 acts as the Proton acceptor; for phosphorylation activity. Proton donor; for dephosphorylation activity in catalysis. The important for the catalytic mechanism of both phosphorylation and dephosphorylation stretch occupies residues 206-215 (LEVRGLGVLN). Residue Glu207 coordinates Mg(2+). Arg251 is a catalytic residue. The important for the catalytic mechanism of dephosphorylation stretch occupies residues 272 to 277 (PVMPGR).

It belongs to the HPrK/P family. Homohexamer. It depends on Mg(2+) as a cofactor.

The catalysed reaction is [HPr protein]-L-serine + ATP = [HPr protein]-O-phospho-L-serine + ADP + H(+). It catalyses the reaction [HPr protein]-O-phospho-L-serine + phosphate + H(+) = [HPr protein]-L-serine + diphosphate. Functionally, catalyzes the ATP- as well as the pyrophosphate-dependent phosphorylation of a specific serine residue in HPr, a phosphocarrier protein of the phosphoenolpyruvate-dependent sugar phosphotransferase system (PTS). HprK/P also catalyzes the pyrophosphate-producing, inorganic phosphate-dependent dephosphorylation (phosphorolysis) of seryl-phosphorylated HPr (P-Ser-HPr). This is HPr kinase/phosphorylase from Xanthomonas oryzae pv. oryzae (strain MAFF 311018).